The primary structure comprises 614 residues: ATP-dependent zinc metalloprotease FtsH (614 aa).

At 1–7 (MKKQWKK) the chain is on the stromal side. Residues 8–28 (IVLFVLPVIITLITLSSFLFY) form a helical membrane-spanning segment. The Lumenal segment spans residues 29–116 (NQDVVHNWSS…AHPSSSNVNL (88 aa)). A helical transmembrane segment spans residues 117 to 137 (VSWLSNLLLPLILIITLFFFF). The Stromal segment spans residues 138 to 614 (RRGNKSSSGP…EFMRIVEERV (477 aa)). Residue 211 to 218 (GPPGTGKT) participates in ATP binding. Position 432 (His-432) interacts with Zn(2+). Glu-433 is a catalytic residue. Zn(2+) contacts are provided by His-436 and Asp-510.

The protein in the central section; belongs to the AAA ATPase family. It in the C-terminal section; belongs to the peptidase M41 family. Homohexamer. The cofactor is Zn(2+).

The protein localises to the plastid. It is found in the chloroplast thylakoid membrane. Functionally, acts as a processive, ATP-dependent zinc metallopeptidase. The chain is ATP-dependent zinc metalloprotease FtsH from Cyanidium caldarium (Red alga).